The sequence spans 185 residues: Bacteriocin UviA (185 aa).

Functionally, may have a role in bacteriocin secretion or immunity. The polypeptide is Bacteriocin UviA (uviA) (Clostridium perfringens).